Consider the following 276-residue polypeptide: Aspartate dehydrogenase domain-containing protein (276 aa).

The protein belongs to the L-aspartate dehydrogenase family.

In Danio rerio (Zebrafish), this protein is Aspartate dehydrogenase domain-containing protein (aspdh).